The primary structure comprises 381 residues: L-lactate dehydrogenase (381 aa).

The FMN hydroxy acid dehydrogenase domain occupies 1-380 (MIISASTDYR…SADSLVRELG (380 aa)). Y24 is a substrate binding site. Residues S106 and Q127 each coordinate FMN. Y129 provides a ligand contact to substrate. T155 provides a ligand contact to FMN. R164 provides a ligand contact to substrate. K251 serves as a coordination point for FMN. H275 functions as the Proton acceptor in the catalytic mechanism. R278 provides a ligand contact to substrate. Residue 306–330 (DSGIRTGLDVVRMIALGADSVLLGR) coordinates FMN.

The protein belongs to the FMN-dependent alpha-hydroxy acid dehydrogenase family. In terms of assembly, homotetramer. Requires FMN as cofactor.

It localises to the cell inner membrane. The catalysed reaction is (S)-lactate + A = pyruvate + AH2. Catalyzes the conversion of L-lactate to pyruvate. Is coupled to the respiratory chain. The chain is L-lactate dehydrogenase from Pseudomonas aeruginosa (strain UCBPP-PA14).